The following is a 444-amino-acid chain: 1,4-beta-D-glucan glucohydrolase (444 aa).

Residue Glu164 is the Proton donor of the active site. Glu349 (nucleophile) is an active-site residue.

This sequence belongs to the glycosyl hydrolase 1 family. As to quaternary structure, monomer.

It catalyses the reaction Hydrolysis of (1-&gt;4)-linkages in (1-&gt;4)-beta-D-glucans, to remove successive glucose units.. It carries out the reaction Hydrolysis of terminal, non-reducing beta-D-glucosyl residues with release of beta-D-glucose.. Its pathway is glycan metabolism; cellulose degradation. It participates in glycan metabolism; beta-D-glucan degradation. Activated by glucose up to 200 mM when p-nitrophenyl-beta-glucoside is used as the substrate. This activation by end product concentrations may be due to a transglycosylation activity of the enzyme. Broad substrate specificity glycosidase. Releases glucose from soluble glucooligomers, with a preference for longer oligomers; acts more readily on cellotetraose than on cellobiose. Displays similar activities towards the disaccharides lactose and cellobiose. Is also able to hydrolyze various aryl-beta-glycosides in vitro. The polypeptide is 1,4-beta-D-glucan glucohydrolase (Thermotoga neapolitana (strain ATCC 49049 / DSM 4359 / NBRC 107923 / NS-E)).